A 1182-amino-acid polypeptide reads, in one-letter code: Retrotransposable element SLACS 132 kDa protein (1182 aa).

Disordered regions lie at residues 77–97, 163–220, 317–339, and 418–478; these read GERS…PRER, DVLD…STDQ, RRKR…ALRL, and RTAR…STAP. Residues 163-174 show a composition bias toward acidic residues; the sequence is DVLDEEEQDDDL. The segment covering 420-446 has biased composition (basic and acidic residues); sequence ARREQQQQRGKDNQEEEDRQKKEEKSL. A compositionally biased stretch (polar residues) spans 456–475; sequence SVRQGGQPSSSQPKRLNRWS. The Reverse transcriptase domain occupies 560–790; that stretch reads NADVSMEVGR…TGDTGFGTAV (231 aa).

The catalysed reaction is DNA(n) + a 2'-deoxyribonucleoside 5'-triphosphate = DNA(n+1) + diphosphate. The polypeptide is Retrotransposable element SLACS 132 kDa protein (Trypanosoma brucei gambiense).